The following is a 456-amino-acid chain: Bifunctional protein GlmU (456 aa).

A pyrophosphorylase region spans residues 1 to 230 (MDKRFAVVLA…FQETLGVNDR (230 aa)). Residues 9–12 (LAAG), K23, Q73, and 78–79 (GT) contribute to the UDP-N-acetyl-alpha-D-glucosamine site. D103 serves as a coordination point for Mg(2+). UDP-N-acetyl-alpha-D-glucosamine is bound by residues G140, E155, N170, and N228. Residue N228 participates in Mg(2+) binding. A linker region spans residues 231–251 (VALSQAEIYMKQRINKRHMQN). The N-acetyltransferase stretch occupies residues 252-456 (GVSLIDPDNT…EDYAENIHKK (205 aa)). Residues R333 and K351 each contribute to the UDP-N-acetyl-alpha-D-glucosamine site. The Proton acceptor role is filled by H363. Residues Y366 and N377 each coordinate UDP-N-acetyl-alpha-D-glucosamine. Acetyl-CoA is bound by residues 386-387 (NY), A423, and R440.

This sequence in the N-terminal section; belongs to the N-acetylglucosamine-1-phosphate uridyltransferase family. The protein in the C-terminal section; belongs to the transferase hexapeptide repeat family. Homotrimer. Mg(2+) serves as cofactor.

It is found in the cytoplasm. The catalysed reaction is alpha-D-glucosamine 1-phosphate + acetyl-CoA = N-acetyl-alpha-D-glucosamine 1-phosphate + CoA + H(+). It carries out the reaction N-acetyl-alpha-D-glucosamine 1-phosphate + UTP + H(+) = UDP-N-acetyl-alpha-D-glucosamine + diphosphate. Its pathway is nucleotide-sugar biosynthesis; UDP-N-acetyl-alpha-D-glucosamine biosynthesis; N-acetyl-alpha-D-glucosamine 1-phosphate from alpha-D-glucosamine 6-phosphate (route II): step 2/2. The protein operates within nucleotide-sugar biosynthesis; UDP-N-acetyl-alpha-D-glucosamine biosynthesis; UDP-N-acetyl-alpha-D-glucosamine from N-acetyl-alpha-D-glucosamine 1-phosphate: step 1/1. It participates in bacterial outer membrane biogenesis; LPS lipid A biosynthesis. In terms of biological role, catalyzes the last two sequential reactions in the de novo biosynthetic pathway for UDP-N-acetylglucosamine (UDP-GlcNAc). The C-terminal domain catalyzes the transfer of acetyl group from acetyl coenzyme A to glucosamine-1-phosphate (GlcN-1-P) to produce N-acetylglucosamine-1-phosphate (GlcNAc-1-P), which is converted into UDP-GlcNAc by the transfer of uridine 5-monophosphate (from uridine 5-triphosphate), a reaction catalyzed by the N-terminal domain. The chain is Bifunctional protein GlmU from Bacillus licheniformis (strain ATCC 14580 / DSM 13 / JCM 2505 / CCUG 7422 / NBRC 12200 / NCIMB 9375 / NCTC 10341 / NRRL NRS-1264 / Gibson 46).